Here is a 631-residue protein sequence, read N- to C-terminus: PTS system beta-glucoside-specific EIIBCA component (631 aa).

The PTS EIIB type-1 domain occupies 1–86 (MNYETLASEI…LSLDGMARFS (86 aa)). The Phosphocysteine intermediate; for EIIB activity role is filled by Cys-26. A PTS EIIC type-1 domain is found at 105 to 466 (DIISSIFTPF…DETQPAAADS (362 aa)). The next 10 membrane-spanning stretches (helical) occupy residues 120–140 (ATGI…ISES), 146–166 (LLFA…GYTA), 175–195 (FTTL…AFNA), 206–226 (FLGI…ILFA), 248–268 (FFTP…LIGP), 295–315 (VMGA…FVPL), 328–348 (LLPL…GVLL), 358–378 (IAGS…VYGV), 385–405 (PFIF…YAHT), and 434–454 (AVIG…SFGV). The PTS EIIA type-1 domain occupies 501–605 (DRTFASGVMG…DLTTPIVITN (105 aa)). Residue His-553 is the Tele-phosphohistidine intermediate; for EIIA activity of the active site.

The protein resides in the cell inner membrane. The phosphoenolpyruvate-dependent sugar phosphotransferase system (sugar PTS), a major carbohydrate active -transport system, catalyzes the phosphorylation of incoming sugar substrates concomitantly with their translocation across the cell membrane. This system is involved in beta-glucoside transport. Functionally, acts both as a kinase and as a phosphatase on ArbG. The protein is PTS system beta-glucoside-specific EIIBCA component (arbF) of Dickeya chrysanthemi (Pectobacterium chrysanthemi).